We begin with the raw amino-acid sequence, 369 residues long: Ferredoxin--NADP reductase, chloroplastic (369 aa).

Residues 1-55 constitute a chloroplast transit peptide; the sequence is MTTAVTAAVSFPSTKTTSLSARSSSVISPDKISYKKVPLYYRNVSATGKMGPIRA. The 123-residue stretch at 90 to 212 folds into the FAD-binding FR-type domain; the sequence is KTPYVGRCLL…TGPVGKEMLM (123 aa). FAD contacts are provided by residues 148 to 151, 169 to 171, Tyr-175, 186 to 188, and Thr-227; these read RLYS, CVK, and VCS. Residues Ser-151 and Lys-171 each contribute to the NADP(+) site. NADP(+) is bound by residues Thr-227, 259–260, 289–290, 299–301, 328–329, and Glu-367; these read VP, SR, KMY, and GL.

This sequence belongs to the ferredoxin--NADP reductase type 1 family. Requires FAD as cofactor.

It is found in the plastid. The protein localises to the chloroplast stroma. Its subcellular location is the chloroplast thylakoid membrane. It catalyses the reaction 2 reduced [2Fe-2S]-[ferredoxin] + NADP(+) + H(+) = 2 oxidized [2Fe-2S]-[ferredoxin] + NADPH. It functions in the pathway energy metabolism; photosynthesis. Its function is as follows. May play a key role in regulating the relative amounts of cyclic and non-cyclic electron flow to meet the demands of the plant for ATP and reducing power. In Spinacia oleracea (Spinach), this protein is Ferredoxin--NADP reductase, chloroplastic (PETH).